The primary structure comprises 473 residues: Cysteine--tRNA ligase (473 aa).

Cys27 lines the Zn(2+) pocket. Positions Ile29–His39 match the 'HIGH' region motif. Positions 213, 238, and 242 each coordinate Zn(2+). The short motif at Lys271–Ser275 is the 'KMSKS' region element. Lys274 serves as a coordination point for ATP.

The protein belongs to the class-I aminoacyl-tRNA synthetase family. Zn(2+) is required as a cofactor.

Its subcellular location is the cytoplasm. It carries out the reaction tRNA(Cys) + L-cysteine + ATP = L-cysteinyl-tRNA(Cys) + AMP + diphosphate. The sequence is that of Cysteine--tRNA ligase from Pyrobaculum islandicum (strain DSM 4184 / JCM 9189 / GEO3).